Here is a 789-residue protein sequence, read N- to C-terminus: DEAD-box ATP-dependent RNA helicase 28 (789 aa).

The interval 1–152 (MPSSFFFEDA…AEYKPEDATP (152 aa)) is disordered. The stretch at 13–66 (DELELIRNQEDSSEEDVKEGEAEEHEAGEDEDGEEEYEEEDDDEEEEDEKRKRD) forms a coiled coil. Positions 23–60 (DSSEEDVKEGEAEEHEAGEDEDGEEEYEEEDDDEEEED) are enriched in acidic residues. A compositionally biased stretch (basic and acidic residues) spans 83-99 (GEEHARRHTTSIDEKIS). Positions 110 to 135 (SINEEEEEEEEEEDASDAETDKQEEY) form a coiled coil. The segment covering 112–127 (NEEEEEEEEEEDASDA) has biased composition (acidic residues). Positions 167–195 (DTFMELNLSRPLLRACETLGYKKPTPIQA) match the Q motif motif. Residues 198 to 372 (IPLALTGRDL…KLSLNKPLRL (175 aa)) enclose the Helicase ATP-binding domain. 211–218 (AITGSGKT) serves as a coordination point for ATP. The DEAD box motif lies at 320 to 323 (DEAD). The region spanning 402-546 (VLLSLCTRTF…SRVIPEQSIV (145 aa)) is the Helicase C-terminal domain. 2 coiled-coil regions span residues 563–591 (ISAE…HRDE) and 628–677 (SADR…EDEE). Residues 611–789 (AQAEKDSAGN…FKSKARYKRR (179 aa)) form a disordered region. Residues 628–637 (SADRAEDLKM) show a composition bias toward basic and acidic residues. A compositionally biased stretch (basic residues) spans 638–656 (KEKRKREREKNLPRKKRRK). The segment covering 665 to 678 (EDNEGEEEEEDEEG) has biased composition (acidic residues). Basic and acidic residues-rich tracts occupy residues 691–701 (KKQETDKKGLT), 718–734 (RAID…DKKQ), and 743–761 (PRGE…EKKQ). The segment covering 772–789 (PRTKSKNSFKSKARYKRR) has biased composition (basic residues).

Belongs to the DEAD box helicase family. DDX27/DRS1 subfamily.

It catalyses the reaction ATP + H2O = ADP + phosphate + H(+). The polypeptide is DEAD-box ATP-dependent RNA helicase 28 (RH28) (Arabidopsis thaliana (Mouse-ear cress)).